A 250-amino-acid chain; its full sequence is 3-deoxy-manno-octulosonate cytidylyltransferase (250 aa).

It belongs to the KdsB family.

It localises to the cytoplasm. It catalyses the reaction 3-deoxy-alpha-D-manno-oct-2-ulosonate + CTP = CMP-3-deoxy-beta-D-manno-octulosonate + diphosphate. The protein operates within nucleotide-sugar biosynthesis; CMP-3-deoxy-D-manno-octulosonate biosynthesis; CMP-3-deoxy-D-manno-octulosonate from 3-deoxy-D-manno-octulosonate and CTP: step 1/1. It functions in the pathway bacterial outer membrane biogenesis; lipopolysaccharide biosynthesis. Its function is as follows. Activates KDO (a required 8-carbon sugar) for incorporation into bacterial lipopolysaccharide in Gram-negative bacteria. The sequence is that of 3-deoxy-manno-octulosonate cytidylyltransferase from Syntrophobacter fumaroxidans (strain DSM 10017 / MPOB).